The chain runs to 140 residues: Large ribosomal subunit protein uL16 (140 aa).

Belongs to the universal ribosomal protein uL16 family. In terms of assembly, part of the 50S ribosomal subunit.

Functionally, binds 23S rRNA and is also seen to make contacts with the A and possibly P site tRNAs. This is Large ribosomal subunit protein uL16 from Malacoplasma penetrans (strain HF-2) (Mycoplasma penetrans).